Reading from the N-terminus, the 137-residue chain is MPTINQLVRKPRKSKVEKSDSPALNIGYNSHKKVHTKLAAPQKRGVATRVGTMTPKKPNSALRKFARVRLSNLIEVTAYIPGIGHNLQEHSVVLIRGGRVKDLPGVRYHIVRGALDTAGVTDRKQGRSKYGTKKPKA.

Disordered regions lie at residues 1 to 21 and 34 to 57; these read MPTINQLVRKPRKSKVEKSDS and VHTKLAAPQKRGVATRVGTMTPKK.

The protein belongs to the universal ribosomal protein uS12 family. Part of the 30S ribosomal subunit. Contacts proteins S8 and S17. May interact with IF1 in the 30S initiation complex.

Functionally, with S4 and S5 plays an important role in translational accuracy. Its function is as follows. Interacts with and stabilizes bases of the 16S rRNA that are involved in tRNA selection in the A site and with the mRNA backbone. Located at the interface of the 30S and 50S subunits, it traverses the body of the 30S subunit contacting proteins on the other side and probably holding the rRNA structure together. The combined cluster of proteins S8, S12 and S17 appears to hold together the shoulder and platform of the 30S subunit. The protein is Small ribosomal subunit protein uS12 of Streptococcus mutans serotype c (strain ATCC 700610 / UA159).